The primary structure comprises 154 residues: Toxin YhaV (154 aa).

As to quaternary structure, homohexamer; forms a complex with PrlF (SohA) with stoichiometry PrlF(2)-YhaV(4), possibly as a YhaV(2)-PrlF(2)-YhaV(2) complex like the MazFE complex. May dimerize in solution.

In terms of biological role, toxic component of a type II toxin-antitoxin (TA) system. Has RNase activity in vitro. Acts as a transcription factor. The YhaV/PrlF complex binds the prlF-yhaV operon, probably negatively regulating its expression. The chain is Toxin YhaV (yhaV) from Escherichia coli O157:H7.